The chain runs to 174 residues: MTLILGIDPGSRITGYGVVRDTGRGCEYVASGCIRTGSGELSERLRAVFSGVSEVIRTYGPVTMGIEQVFMARNADSALKLGQARGAAIVAGAEAGLQIAEYTATQVKQAIAGTGGADKQQVQMMVMHLLKLLEKPQIDASDALAIALCHAHHRQSLVPHGLIGAKRRGGRLRL.

Catalysis depends on residues D8, E67, and D139. 3 residues coordinate Mg(2+): D8, E67, and D139.

Belongs to the RuvC family. In terms of assembly, homodimer which binds Holliday junction (HJ) DNA. The HJ becomes 2-fold symmetrical on binding to RuvC with unstacked arms; it has a different conformation from HJ DNA in complex with RuvA. In the full resolvosome a probable DNA-RuvA(4)-RuvB(12)-RuvC(2) complex forms which resolves the HJ. Mg(2+) serves as cofactor.

It localises to the cytoplasm. The catalysed reaction is Endonucleolytic cleavage at a junction such as a reciprocal single-stranded crossover between two homologous DNA duplexes (Holliday junction).. In terms of biological role, the RuvA-RuvB-RuvC complex processes Holliday junction (HJ) DNA during genetic recombination and DNA repair. Endonuclease that resolves HJ intermediates. Cleaves cruciform DNA by making single-stranded nicks across the HJ at symmetrical positions within the homologous arms, yielding a 5'-phosphate and a 3'-hydroxyl group; requires a central core of homology in the junction. The consensus cleavage sequence is 5'-(A/T)TT(C/G)-3'. Cleavage occurs on the 3'-side of the TT dinucleotide at the point of strand exchange. HJ branch migration catalyzed by RuvA-RuvB allows RuvC to scan DNA until it finds its consensus sequence, where it cleaves and resolves the cruciform DNA. This is Crossover junction endodeoxyribonuclease RuvC from Stutzerimonas stutzeri (strain A1501) (Pseudomonas stutzeri).